A 1040-amino-acid chain; its full sequence is Putative protein tag-76 (1040 aa).

Polar residues predominate over residues 1-15; it reads MSRRNATSFVDNNTL. 2 disordered regions span residues 1 to 61 and 322 to 367; these read MSRR…GSVS and RTSK…PGAN. A compositionally biased stretch (low complexity) spans 16-32; the sequence is TSSGISGSGSMSPPITS. Positions 33–50 are enriched in polar residues; it reads RPASGQASPLTSNGSLSP. Residues 333 to 356 are compositionally biased toward gly residues; sequence GPGGPGGPGGYRGGRGGGRGGSYG. Positions 379-486 constitute a PAZ domain; it reads FTMDTLSRDT…LPMEHCLIDS (108 aa). In terms of domain architecture, Piwi spans 660–966; the sequence is CIIVVLQSKN…VATRARCHVK (307 aa).

This chain is Putative protein tag-76 (tag-76), found in Caenorhabditis elegans.